The chain runs to 97 residues: Intermembrane phospholipid transport system binding protein MlaB (97 aa).

In terms of domain architecture, STAS spans Met-1–Arg-97.

As to quaternary structure, the complex is composed of two ATP-binding proteins (MlaF), two transmembrane proteins (MlaE), two cytoplasmic solute-binding proteins (MlaB) and six periplasmic solute-binding proteins (MlaD).

The protein resides in the cytoplasm. In terms of biological role, part of the ABC transporter complex MlaFEDB, which is involved in a phospholipid transport pathway that maintains lipid asymmetry in the outer membrane by retrograde trafficking of phospholipids from the outer membrane to the inner membrane. MlaB plays critical roles in both the assembly and activity of the complex. May act by modulating MlaF structure and stability. In Escherichia coli (strain K12), this protein is Intermembrane phospholipid transport system binding protein MlaB.